The primary structure comprises 119 residues: Protein GSKIP homolog (119 aa).

It belongs to the GSKIP family.

The chain is Protein GSKIP homolog from Drosophila melanogaster (Fruit fly).